The sequence spans 294 residues: Glyceraldehyde-3-phosphate dehydrogenase (294 aa).

NAD(+)-binding residues include D19, R63, and T105. Residues S134 to T136 and T165 each bind D-glyceraldehyde 3-phosphate. The Nucleophile role is filled by C135. An N6-acetyllysine modification is found at K177. D-glyceraldehyde 3-phosphate contacts are provided by residues T194–G195 and R217. K234 is subject to N6-acetyllysine.

The protein belongs to the glyceraldehyde-3-phosphate dehydrogenase family. In terms of assembly, homotetramer.

Its subcellular location is the cytoplasm. The enzyme catalyses D-glyceraldehyde 3-phosphate + phosphate + NAD(+) = (2R)-3-phospho-glyceroyl phosphate + NADH + H(+). It functions in the pathway carbohydrate degradation; glycolysis; pyruvate from D-glyceraldehyde 3-phosphate: step 1/5. In terms of biological role, catalyzes the oxidative phosphorylation of glyceraldehyde 3-phosphate (G3P) to 1,3-bisphosphoglycerate (BPG) using the cofactor NAD. The first reaction step involves the formation of a hemiacetal intermediate between G3P and a cysteine residue, and this hemiacetal intermediate is then oxidized to a thioester, with concomitant reduction of NAD to NADH. The reduced NADH is then exchanged with the second NAD, and the thioester is attacked by a nucleophilic inorganic phosphate to produce BPG. The polypeptide is Glyceraldehyde-3-phosphate dehydrogenase (gap) (Pseudescherichia vulneris (Escherichia vulneris)).